Consider the following 418-residue polypeptide: L-rhamnose isomerase (418 aa).

Residues histidine 262, aspartate 294, and aspartate 296 each contribute to the Mn(2+) site.

This sequence belongs to the rhamnose isomerase family. It depends on Mn(2+) as a cofactor.

The protein resides in the cytoplasm. It carries out the reaction L-rhamnopyranose = L-rhamnulose. It functions in the pathway carbohydrate degradation; L-rhamnose degradation; glycerone phosphate from L-rhamnose: step 1/3. Catalyzes the interconversion of L-rhamnose and L-rhamnulose. This is L-rhamnose isomerase from Bacteroides thetaiotaomicron (strain ATCC 29148 / DSM 2079 / JCM 5827 / CCUG 10774 / NCTC 10582 / VPI-5482 / E50).